We begin with the raw amino-acid sequence, 247 residues long: Protein LIFEGUARD 4 (247 aa).

A run of 7 helical transmembrane segments spans residues 42–62, 75–95, 105–125, 130–150, 165–185, 188–208, and 222–242; these read VYSIIAFQLLATIAVASTVVF, AGLALWIVLIITPLIVMCPLY, YLLLGIFTVALAFAVGLTCAF, VILEAAILTTVVVLSLTVYTF, FLFGALIVLMVFALIQIFFPL, ISVMIYGCLAAIIFCGYIVYD, and IWAAVSLYLDIINLFLALLTI.

It belongs to the BI1 family.

It is found in the membrane. The protein is Protein LIFEGUARD 4 of Arabidopsis thaliana (Mouse-ear cress).